The primary structure comprises 668 residues: Small ribosomal subunit protein mS81 (rPPR8) (668 aa).

Residues 1-36 (MRYQQWRLMLLRSYHRSHLPYLSPCSQVTSISSRSF) constitute a mitochondrion transit peptide. PPR repeat units lie at residues 286 to 320 (DEKTYNAMARVLGKEKFLDRFQNIVVEMRSAGYEV), 321 to 355 (EIETYVRVSTRFCQTKLIKEAVDLFEIAMAGSSSS), 396 to 430 (TDSLLKSVLKSLRSVDRVEQSNELLKEMKRGGYVP), 431 to 465 (SGDMQSMIASSLSRKGKKDEADEFVDFMESSGNNL), 466 to 496 (DDKAMASLVEGYCDSGNLDEALVCFEKMVGN), 502 to 537 (ADYSFEKLVLAYCNKNQVRDAYKLLSAQVTKNQLKP), and 543 to 577 (KSLVTNLLTKKIARDGGFEEALSLLPIMKDHGFPP).

The protein belongs to the PPR family. P subfamily. Component of the mitochondrial ribosome small subunit.

Its subcellular location is the mitochondrion. This is Small ribosomal subunit protein mS81 (rPPR8) from Arabidopsis thaliana (Mouse-ear cress).